The primary structure comprises 346 residues: Phosphoribosylformylglycinamidine cyclo-ligase (346 aa).

The protein belongs to the AIR synthase family.

It localises to the cytoplasm. It carries out the reaction 2-formamido-N(1)-(5-O-phospho-beta-D-ribosyl)acetamidine + ATP = 5-amino-1-(5-phospho-beta-D-ribosyl)imidazole + ADP + phosphate + H(+). Its pathway is purine metabolism; IMP biosynthesis via de novo pathway; 5-amino-1-(5-phospho-D-ribosyl)imidazole from N(2)-formyl-N(1)-(5-phospho-D-ribosyl)glycinamide: step 2/2. In Bacillus cereus (strain ZK / E33L), this protein is Phosphoribosylformylglycinamidine cyclo-ligase.